Reading from the N-terminus, the 433-residue chain is Aspartate--tRNA(Asp/Asn) ligase (433 aa).

Glutamate 167 lines the L-aspartate pocket. Positions 189–192 (QLFK) are aspartate. Arginine 211 is an L-aspartate binding site. ATP is bound by residues 211-213 (RAE), 219-221 (RHL), and glutamate 356. Mg(2+)-binding residues include glutamate 356 and serine 359. Residues serine 359 and arginine 363 each coordinate L-aspartate. Residue 404–407 (GGER) coordinates ATP.

It belongs to the class-II aminoacyl-tRNA synthetase family. Type 2 subfamily. As to quaternary structure, homodimer. It depends on Mg(2+) as a cofactor.

Its subcellular location is the cytoplasm. It catalyses the reaction tRNA(Asx) + L-aspartate + ATP = L-aspartyl-tRNA(Asx) + AMP + diphosphate. Its function is as follows. Aspartyl-tRNA synthetase with relaxed tRNA specificity since it is able to aspartylate not only its cognate tRNA(Asp) but also tRNA(Asn). Reaction proceeds in two steps: L-aspartate is first activated by ATP to form Asp-AMP and then transferred to the acceptor end of tRNA(Asp/Asn). The chain is Aspartate--tRNA(Asp/Asn) ligase from Haloferax volcanii (Halobacterium volcanii).